Consider the following 411-residue polypeptide: Serine hydroxymethyltransferase (411 aa).

Residue 120 to 122 coordinates (6S)-5,6,7,8-tetrahydrofolate; the sequence is GHL. Lysine 225 carries the post-translational modification N6-(pyridoxal phosphate)lysine. 350 to 352 provides a ligand contact to (6S)-5,6,7,8-tetrahydrofolate; that stretch reads SPF.

The protein belongs to the SHMT family. Homodimer. The cofactor is pyridoxal 5'-phosphate.

It localises to the cytoplasm. The enzyme catalyses (6R)-5,10-methylene-5,6,7,8-tetrahydrofolate + glycine + H2O = (6S)-5,6,7,8-tetrahydrofolate + L-serine. It participates in one-carbon metabolism; tetrahydrofolate interconversion. The protein operates within amino-acid biosynthesis; glycine biosynthesis; glycine from L-serine: step 1/1. Functionally, catalyzes the reversible interconversion of serine and glycine with tetrahydrofolate (THF) serving as the one-carbon carrier. This reaction serves as the major source of one-carbon groups required for the biosynthesis of purines, thymidylate, methionine, and other important biomolecules. Also exhibits THF-independent aldolase activity toward beta-hydroxyamino acids, producing glycine and aldehydes, via a retro-aldol mechanism. The polypeptide is Serine hydroxymethyltransferase (Lactobacillus acidophilus (strain ATCC 700396 / NCK56 / N2 / NCFM)).